The chain runs to 307 residues: Pseudouridine-5'-phosphate glycosidase (307 aa).

Glutamate 28 (proton donor) is an active-site residue. Substrate-binding residues include lysine 89 and valine 109. Aspartate 141 contacts Mn(2+). Residue 143-145 coordinates substrate; it reads SAD. The Nucleophile role is filled by lysine 162.

Belongs to the pseudouridine-5'-phosphate glycosidase family. In terms of assembly, homotrimer. It depends on Mn(2+) as a cofactor.

The catalysed reaction is D-ribose 5-phosphate + uracil = psi-UMP + H2O. In terms of biological role, catalyzes the reversible cleavage of pseudouridine 5'-phosphate (PsiMP) to ribose 5-phosphate and uracil. Functions biologically in the cleavage direction, as part of a pseudouridine degradation pathway. This chain is Pseudouridine-5'-phosphate glycosidase, found in Nocardioides sp. (strain ATCC BAA-499 / JS614).